The sequence spans 1367 residues: Protein patched homolog 3 (1367 aa).

The Cytoplasmic portion of the chain corresponds to 1–97 (MSFPDEETDL…WLFRIGCFVQ (97 aa)). A helical membrane pass occupies residues 98-118 (RWAWSTIFISLFLYCLCLGGL). Residues 119 to 625 (RHVTIETDLV…IADMLEEFSQ (507 aa)) lie on the Extracellular side of the membrane. Asn235, Asn310, Asn454, and Asn591 each carry an N-linked (GlcNAc...) asparagine glycan. The helical transmembrane segment at 626–646 (FNYIIIVIGYILMVIYAAFTQ) threads the bilayer. Positions 627 to 788 (NYIIIVIGYI…MFIFPAMIGI (162 aa)) constitute an SSD domain. The Cytoplasmic portion of the chain corresponds to 647–659 (GRFQGWWLAVQSN). A helical membrane pass occupies residues 660–680 (VALAICGVILVTISSICGLGF). At 681 to 694 (ATHLGINFNAATTQ) the chain is on the extracellular side. Residues 695 to 715 (VVPFLSLGLGIDDMFLLLHNY) traverse the membrane as a helical segment. Residues 716-737 (DEIINICNKNEIGVLLKETGMS) lie on the Cytoplasmic side of the membrane. The helical transmembrane segment at 738–758 (VMLTSINNILAFISGYVLPIP) threads the bilayer. Topologically, residues 759–767 (ALRSFCSQT) are extracellular. A helical membrane pass occupies residues 768 to 788 (AILLAFNLIFLMFIFPAMIGI). At 789–863 (DLRRQRKGKR…KIYIPALKNN (75 aa)) the chain is on the cytoplasmic side. A helical transmembrane segment spans residues 864–884 (VVKACVLIGTTTAVVFGLYGM). Residues 885–1143 (YTSTLGLELA…WEQYLTLRWN (259 aa)) lie on the Extracellular side of the membrane. The helical transmembrane segment at 1144–1164 (LFQAICIIALAVFCVISILMF) threads the bilayer. Residues 1165 to 1171 (NPWAATL) lie on the Cytoplasmic side of the membrane. A helical transmembrane segment spans residues 1172–1192 (IMCIVVITTIELGGFMGLMGI). Over 1193-1199 (KMNPISA) the chain is Extracellular. Residues 1200–1220 (VTLICAVGIGVEFTAHVELAF) form a helical membrane-spanning segment. Topologically, residues 1221-1237 (LTALGTIDQRLESCLQH) are cytoplasmic. The chain crosses the membrane as a helical span at residues 1238-1258 (MFVPVYHGAISTFLGVVMLVF). Over 1259-1273 (SEFDFVVTYFFYTMT) the chain is Extracellular. The chain crosses the membrane as a helical span at residues 1274-1294 (LLVALGVFNGLCVLPVILTLV). At 1295 to 1367 (GPKPELTPTD…SDDESSPAHK (73 aa)) the chain is on the cytoplasmic side. A disordered region spans residues 1302 to 1367 (PTDGSSVLPP…SDDESSPAHK (66 aa)). A compositionally biased stretch (low complexity) spans 1346-1356 (RDSPSTSSASH).

This sequence belongs to the patched family. In males, expressed in the precursor and mature sensory rays, the cloaca, and pre-anal ganglia and cephalic neurons. Also expressed in five cells in the valve region between the seminal vesicle and vas deferens of the somatic gonad.

It localises to the apical cell membrane. Its subcellular location is the cell junction. The protein resides in the adherens junction. Its function is as follows. Regulates osmosis during embryonic development. Required for larval development and in particular is involved in larval molting. This is Protein patched homolog 3 from Caenorhabditis elegans.